The sequence spans 64 residues: Large ribosomal subunit protein bL35 (64 aa).

The tract at residues 1–20 (MKQKTHKGTAKRIKVTGSGK) is disordered.

Belongs to the bacterial ribosomal protein bL35 family.

The sequence is that of Large ribosomal subunit protein bL35 from Corynebacterium urealyticum (strain ATCC 43042 / DSM 7109).